A 249-amino-acid chain; its full sequence is NADH-quinone oxidoreductase subunit C (249 aa).

The disordered stretch occupies residues 1 to 29 (MTENQTTPDPGEPGSSADRPGGLVPTGDS).

It belongs to the complex I 30 kDa subunit family. As to quaternary structure, NDH-1 is composed of 14 different subunits. Subunits NuoB, C, D, E, F, and G constitute the peripheral sector of the complex.

It localises to the cell membrane. The enzyme catalyses a quinone + NADH + 5 H(+)(in) = a quinol + NAD(+) + 4 H(+)(out). In terms of biological role, NDH-1 shuttles electrons from NADH, via FMN and iron-sulfur (Fe-S) centers, to quinones in the respiratory chain. The immediate electron acceptor for the enzyme in this species is believed to be a menaquinone. Couples the redox reaction to proton translocation (for every two electrons transferred, four hydrogen ions are translocated across the cytoplasmic membrane), and thus conserves the redox energy in a proton gradient. In Saccharopolyspora erythraea (strain ATCC 11635 / DSM 40517 / JCM 4748 / NBRC 13426 / NCIMB 8594 / NRRL 2338), this protein is NADH-quinone oxidoreductase subunit C.